A 678-amino-acid chain; its full sequence is Zinc finger translocation-associated protein (678 aa).

Disordered regions lie at residues 1-100 (MEPG…PGRD), 174-250 (GAGG…GSRG), 333-413 (LSEL…RDHR), and 493-583 (PESP…NYQP). The span at 66 to 78 (PSSRARGPASSGR) shows a compositional bias: low complexity. The segment covering 79–88 (KYSDHCEARA) has biased composition (basic and acidic residues). The span at 187–200 (AEEEEEEDEEEEEG) shows a compositional bias: acidic residues. Positions 205–214 (ACPPKGSGKA) are enriched in low complexity. A Glycyl lysine isopeptide (Lys-Gly) (interchain with G-Cter in SUMO2) cross-link involves residue Lys-375. Over residues 493–509 (PESPSVPVAPSTASASE) the composition is skewed to low complexity. 2 stretches are compositionally biased toward acidic residues: residues 512-524 (GGAEEAEPEEEWW) and 539-549 (AEEEDDEDDSQ). Residues 557-572 (PPLPLPPPPPPPPPPP) show a composition bias toward pro residues. The segment covering 573-583 (RSREQRRNYQP) has biased composition (basic and acidic residues).

This is Zinc finger translocation-associated protein from Mus musculus (Mouse).